The primary structure comprises 291 residues: Pyridoxal 5'-phosphate synthase subunit PdxS (291 aa).

Aspartate 23 serves as a coordination point for D-ribose 5-phosphate. Lysine 80 acts as the Schiff-base intermediate with D-ribose 5-phosphate in catalysis. Residue glycine 152 coordinates D-ribose 5-phosphate. Arginine 164 serves as a coordination point for D-glyceraldehyde 3-phosphate. D-ribose 5-phosphate-binding positions include glycine 213 and 234–235 (GS).

The protein belongs to the PdxS/SNZ family. In the presence of PdxT, forms a dodecamer of heterodimers.

It catalyses the reaction aldehydo-D-ribose 5-phosphate + D-glyceraldehyde 3-phosphate + L-glutamine = pyridoxal 5'-phosphate + L-glutamate + phosphate + 3 H2O + H(+). The protein operates within cofactor biosynthesis; pyridoxal 5'-phosphate biosynthesis. Its function is as follows. Catalyzes the formation of pyridoxal 5'-phosphate from ribose 5-phosphate (RBP), glyceraldehyde 3-phosphate (G3P) and ammonia. The ammonia is provided by the PdxT subunit. Can also use ribulose 5-phosphate and dihydroxyacetone phosphate as substrates, resulting from enzyme-catalyzed isomerization of RBP and G3P, respectively. This chain is Pyridoxal 5'-phosphate synthase subunit PdxS, found in Desulfitobacterium hafniense (strain DSM 10664 / DCB-2).